A 236-amino-acid polypeptide reads, in one-letter code: GTP cyclohydrolase 1 (236 aa).

Positions 1-52 (MAAARSCNGYARREGPPSPKLGTEKPRVSAGSGGSGDGWRGERPRSEEDNEL) are disordered. Zn(2+) is bound by residues Cys-127, His-130, and Cys-198.

Belongs to the GTP cyclohydrolase I family. Toroid-shaped homodecamer, composed of two pentamers of five dimers.

Its subcellular location is the cytoplasm. The protein resides in the nucleus. The catalysed reaction is GTP + H2O = 7,8-dihydroneopterin 3'-triphosphate + formate + H(+). Its pathway is cofactor biosynthesis; 7,8-dihydroneopterin triphosphate biosynthesis; 7,8-dihydroneopterin triphosphate from GTP: step 1/1. GTP shows a positive allosteric effect, and tetrahydrobiopterin inhibits the enzyme activity. Zinc is required for catalytic activity. Inhibited by Mg(2+). May positively regulate nitric oxide synthesis in endothelial cells. May be involved in dopamine synthesis. May modify pain sensitivity and persistence. The chain is GTP cyclohydrolase 1 (GCH1) from Gallus gallus (Chicken).